We begin with the raw amino-acid sequence, 402 residues long: uncharacterized protein (402 aa).

12 consecutive transmembrane segments (helical) span residues 26–46 (IFMS…AIAY), 67–87 (VALA…YVGF), 96–116 (FAAF…LTII), 126–146 (TVSI…NGTL), 168–188 (LFIL…IGFL), 213–233 (YVAY…MIDS), 235–255 (LFLL…GGYG), 289–309 (PIVI…GSII), 312–332 (ISVF…FDSL), 338–358 (FKNI…AVTI), 360–380 (FALL…SFLL), and 381–401 (LYKK…GYLI).

Belongs to the chromate ion transporter (CHR) (TC 2.A.51) family.

The protein resides in the cell membrane. This is an uncharacterized protein from Methanocaldococcus jannaschii (strain ATCC 43067 / DSM 2661 / JAL-1 / JCM 10045 / NBRC 100440) (Methanococcus jannaschii).